A 318-amino-acid chain; its full sequence is Probable pyridoxal 5'-phosphate synthase subunit PDX1.1 (318 aa).

D-ribose 5-phosphate is bound at residue Asp-49. Lys-106 functions as the Schiff-base intermediate with D-ribose 5-phosphate in the catalytic mechanism. Gly-178 is a binding site for D-ribose 5-phosphate. Arg-190 provides a ligand contact to D-glyceraldehyde 3-phosphate. D-ribose 5-phosphate contacts are provided by residues Gly-239 and Gly-260–Ser-261.

This sequence belongs to the PdxS/SNZ family.

It catalyses the reaction aldehydo-D-ribose 5-phosphate + D-glyceraldehyde 3-phosphate + L-glutamine = pyridoxal 5'-phosphate + L-glutamate + phosphate + 3 H2O + H(+). It participates in cofactor biosynthesis; pyridoxal 5'-phosphate biosynthesis. Catalyzes the formation of pyridoxal 5'-phosphate from ribose 5-phosphate (RBP), glyceraldehyde 3-phosphate (G3P) and ammonia. The ammonia is provided by PDX2. Can also use ribulose 5-phosphate and dihydroxyacetone phosphate as substrates, resulting from enzyme-catalyzed isomerization of RBP and G3P, respectively. Also plays an indirect role in resistance to singlet oxygen-generating photosensitizers. In Oryza sativa subsp. japonica (Rice), this protein is Probable pyridoxal 5'-phosphate synthase subunit PDX1.1 (PDX11).